Here is a 182-residue protein sequence, read N- to C-terminus: Plasmolipin (182 aa).

Positions 1–20 are disordered; that stretch reads MAEFPSKVNTRTSSPAQGGG. The Cytoplasmic portion of the chain corresponds to 1 to 35; that stretch reads MAEFPSKVNTRTSSPAQGGGAVVSTLSPDLGFVRS. A compositionally biased stretch (polar residues) spans 7-16; it reads KVNTRTSSPA. One can recognise an MARVEL domain in the interval 32-166; that stretch reads FVRSSLGALM…SAFLSFQAWR (135 aa). The helical transmembrane segment at 36–56 threads the bilayer; the sequence is SLGALMLLQLVLGLLVWALIA. The Extracellular segment spans residues 57 to 68; that stretch reads DTPYHLYPSYGW. A helical transmembrane segment spans residues 69-89; that stretch reads VMFVAVFLWLVTIIFFVLYLF. The Cytoplasmic segment spans residues 90–99; that stretch reads QLHMKLYMVP. A helical transmembrane segment spans residues 100-120; it reads WPLVLMVFNVGATVLYITAFI. Topologically, residues 121–141 are extracellular; it reads TCSASVELTSLKGSQPYNQRA. The helical transmembrane segment at 142 to 162 threads the bilayer; that stretch reads AASFFSCLVMIAYGVSAFLSF. Residues 163 to 182 lie on the Cytoplasmic side of the membrane; it reads QAWRGVGSNAATSQMAGGYA.

It belongs to the MAL family. As to quaternary structure, forms oligomers. In terms of processing, phosphorylated.

The protein localises to the cell membrane. It localises to the myelin membrane. The protein resides in the apical cell membrane. Main component of the myelin sheath that plays an important role in myelin membrane biogenesis and myelination. Plays an essential function in apical endocytosis. Regulates epithelial development through the regulation of apical endocytosis. Part of the intracellular machinery that mediates basolateral-to-apical transport of ICAM-1, an essential adhesion receptor in epithelial cells, from the subapical compartment in hepatic epithelial cells. This chain is Plasmolipin (PLLP), found in Bos taurus (Bovine).